The chain runs to 231 residues: MLEDLKRQVLEANLALPKHNLVTLTWGNVSAVDRERGVFVIKPSGVDYSVMTADDMVVVSIETGEVVEGTKKPSSDTPTHRLLYQAFPSIGGIVHTHSRHATIWAQAGQSIPATGTTHADYFYGTIPCTRKMTDAEINGEYEWETGNVIVETFEKQGIDAAQMPGVLVHSHGPFAWGKNAEDAVHNAIVLEEVAYMGIFCRQLAPQLPDMQQTLLDKHYLRKHGAKAYYGQ.

Residues 27-28, 44-45, and 74-75 contribute to the substrate site; these read GN, SG, and SS. Zn(2+) is bound by residues Asp76, His95, and His97. Asp120 serves as the catalytic Proton donor/acceptor. Residue His171 participates in Zn(2+) binding. The Proton donor/acceptor role is filled by Tyr229.

This sequence belongs to the aldolase class II family. AraD/FucA subfamily. In terms of assembly, homotetramer. The cofactor is Zn(2+).

The enzyme catalyses L-ribulose 5-phosphate = D-xylulose 5-phosphate. The protein operates within carbohydrate degradation; L-arabinose degradation via L-ribulose; D-xylulose 5-phosphate from L-arabinose (bacterial route): step 3/3. Inhibited by glycolohydroxamate at concentration above 0.1 mM. Its function is as follows. Involved in the degradation of L-arabinose. Catalyzes the interconversion of L-ribulose 5-phosphate (LRu5P) and D-xylulose 5-phosphate (D-Xu5P) via a retroaldol/aldol mechanism (carbon-carbon bond cleavage analogous to a class II aldolase reaction). The chain is L-ribulose-5-phosphate 4-epimerase AraD from Escherichia coli (strain K12).